A 237-amino-acid polypeptide reads, in one-letter code: MQKLAELYRGKAKTVYTTEDPDLLILTFRNDTSALDGQRIEQFDRKGMINNNFNYFIMTKLAEAGIPTQIVRLLSDNEMLVKKLAMVPVECVVRNRAAGSLVKRLGVEEGLVLDPPLFDLFLKNDAMHDPMINESYCTTFGWVSEPHLARMKQLTYQANDVLSKIFDDAGLILVDFKLEFGLFNGEIVLGDEFSPDGSRLWDKTTLDKMDKDRFRQNLGGVIEAYEEVAKRIGVTLD.

Belongs to the SAICAR synthetase family.

It carries out the reaction 5-amino-1-(5-phospho-D-ribosyl)imidazole-4-carboxylate + L-aspartate + ATP = (2S)-2-[5-amino-1-(5-phospho-beta-D-ribosyl)imidazole-4-carboxamido]succinate + ADP + phosphate + 2 H(+). The protein operates within purine metabolism; IMP biosynthesis via de novo pathway; 5-amino-1-(5-phospho-D-ribosyl)imidazole-4-carboxamide from 5-amino-1-(5-phospho-D-ribosyl)imidazole-4-carboxylate: step 1/2. The polypeptide is Phosphoribosylaminoimidazole-succinocarboxamide synthase (Sodalis glossinidius (strain morsitans)).